Here is a 338-residue protein sequence, read N- to C-terminus: RNA 3'-terminal phosphate cyclase (338 aa).

ATP is bound by residues glutamine 103 and 283 to 287; that span reads YLADQ. The active-site Tele-AMP-histidine intermediate is histidine 308.

This sequence belongs to the RNA 3'-terminal cyclase family. Type 1 subfamily.

It is found in the cytoplasm. It catalyses the reaction a 3'-end 3'-phospho-ribonucleotide-RNA + ATP = a 3'-end 2',3'-cyclophospho-ribonucleotide-RNA + AMP + diphosphate. Catalyzes the conversion of 3'-phosphate to a 2',3'-cyclic phosphodiester at the end of RNA. The mechanism of action of the enzyme occurs in 3 steps: (A) adenylation of the enzyme by ATP; (B) transfer of adenylate to an RNA-N3'P to produce RNA-N3'PP5'A; (C) and attack of the adjacent 2'-hydroxyl on the 3'-phosphorus in the diester linkage to produce the cyclic end product. The biological role of this enzyme is unknown but it is likely to function in some aspects of cellular RNA processing. In Escherichia coli O6:K15:H31 (strain 536 / UPEC), this protein is RNA 3'-terminal phosphate cyclase.